A 585-amino-acid polypeptide reads, in one-letter code: MAAVELEWIPETLYNTAISAVVDNYIRSRRDIRSLPENIQFDVYYKLYQQGRLCQLGSEFCELEVFAKVLRALDKRHLLHHCFQALMDHGVKVASVLAYSFSRRCSYIAESDAAVKEKAIQVGFVLGGFLSDAGWYSDAEKVFLSCLQLCTLHDEMLHWFRAVECCVRLLHVRNGNCKYHLGEETFKLAQTYMDKLSKHGQQANKAALYGELCALLFAKSHYDEAYKWCIEAMKEITAGLPVKVVVDVLRQASKACVVKREFKKAEQLIKHAVYLARDHFGSKHPKYSDTLLDYGFYLLNVDNICQSVAIYQAALDIRQSVFGGKNIHVATAHEDLAYSSYVHQYSSGKFDNALFHAERAIGIITHILPEDHLLLASSKRVKALILEEIAIDCHNKETEQRLLQEAHDLHLSSLQLAKKAFGEFNVQTAKHYGNLGRLYQSMRKFKEAEEMHIKAIQIKEQLLGQEDYEVALSVGHLASLYNYDMNQYENAEKLYLRSIAIGKKLFGEGYSGLEYDYRGLIKLYNSIGNYEKVFEYHNVLSNWNRLRDRQYSVTDALEDVSTSPQSTEEVVQSFLISQNVEGPSC.

8 TPR repeats span residues 50 to 83, 120 to 153, 206 to 239, 288 to 321, 333 to 367, 429 to 462, 471 to 505, and 514 to 547; these read QGRL…HHCF, IQVG…CTLH, AALY…ITAG, SDTL…RQSV, HEDL…ITHI, AKHY…KEQL, ALSV…GKKL, and EYDY…NRLR.

In terms of assembly, component of a CRL2 E3 ubiquitin-protein ligase complex, also named ECS (Elongin BC-CUL2/5-SOCS-box protein) complex, composed of CUL2, Elongin BC (ELOB and ELOC), RBX1 and substrate-specific adapter APPBP2. Interacts with APP; APP interaction inhibits the E3 ubiquitin-protein ligase activity of the CRL2(APPBP2) complex. In terms of processing, rapidly degraded by the proteasome upon overexpression of a C-terminal fragment of APP.

The protein resides in the nucleus. Its subcellular location is the cytoplasm. It localises to the cytoskeleton. It is found in the membrane. The protein operates within protein modification; protein ubiquitination. Its activity is regulated as follows. E3 ubiquitin-protein ligase activity of the CRL2(APPBP2) complex is inhibited by APP. Its function is as follows. Substrate-recognition component of a Cul2-RING (CRL2) E3 ubiquitin-protein ligase complex of the DesCEND (destruction via C-end degrons) pathway, which recognizes a C-degron located at the extreme C terminus of target proteins, leading to their ubiquitination and degradation. The C-degron recognized by the DesCEND pathway is usually a motif of less than ten residues and can be present in full-length proteins, truncated proteins or proteolytically cleaved forms. The CRL2(APPBP2) complex specifically recognizes proteins with a -Arg-Xaa-Xaa-Gly degron at the C-terminus, leading to their ubiquitination and degradation. The CRL2(APPBP2) complex mediates ubiquitination and degradation of truncated SELENOV selenoproteins produced by failed UGA/Sec decoding, which end with a -Arg-Xaa-Xaa-Gly degron. May play a role in intracellular protein transport: may be involved in the translocation of APP along microtubules toward the cell surface. This Homo sapiens (Human) protein is Amyloid protein-binding protein 2.